The sequence spans 658 residues: Vertnin (658 aa).

This sequence belongs to the vertnin family.

The protein resides in the nucleus. Its function is as follows. Acts as a transcription factor that regulates development of thoracic vertebrae. In Bos taurus (Bovine), this protein is Vertnin (VRTN).